The chain runs to 637 residues: Palmitoyltransferase Hip14 (637 aa).

Residues 1 to 295 are Cytoplasmic-facing; the sequence is MYQSACQAAT…SKLRHDKRLR (295 aa). 5 ANK repeats span residues 77 to 106, 111 to 140, 144 to 173, 177 to 207, and 212 to 242; these read ETVT…TVDA, LNAT…DPRI, EGCS…DPDL, GGMT…NPAM, and HGNT…SLDV. The helical transmembrane segment at 296–315 threads the bilayer; it reads WWSMVACPFTAFYLAGIVFT. The Lumenal segment spans residues 316-318; sequence VNT. Residues 319–341 form a helical membrane-spanning segment; it reads LYIIKFFLLGCLYSIFHTIGKAL. The Cytoplasmic segment spans residues 342-345; the sequence is FDEH. Residues 346–366 form a helical membrane-spanning segment; sequence LMALLPLSVYLATKAWFYVTW. At 367 to 373 the chain is on the lumenal side; sequence LMYIDDA. The helical transmembrane segment at 374–394 threads the bilayer; the sequence is VSFTATVCFLISSLLLWVCFL. The Cytoplasmic portion of the chain corresponds to 395–472; it reads KSWKGDPGII…VGNCIGLKNH (78 aa). Positions 430–480 constitute a DHHC domain; that stretch reads SFCSGCLVRRPIRSKHCSVCDRCVARFDHHCPWVGNCIGLKNHSYFMGFLW. C460 serves as the catalytic S-palmitoyl cysteine intermediate. A helical membrane pass occupies residues 473-493; sequence SYFMGFLWMLLIMCAWMLYGG. The Lumenal portion of the chain corresponds to 494–520; sequence SKYYVNQCNVRFDDFLGAMRAIGNCDA. Residues 521–541 traverse the membrane as a helical segment; the sequence is WVGWVMGNALLHMSWVILLTI. Topologically, residues 542–637 are cytoplasmic; sequence CQTYQVICLG…DGMAGDHQYV (96 aa).

It belongs to the DHHC palmitoyltransferase family. AKR/ZDHHC17 subfamily. In terms of assembly, interacts with dorsal-ventral patterning protein Sog. In terms of tissue distribution, in stage 13-15 embryos, expressed in the central nervous system. At the third instar larval stage, expressed in the ventral nerve cord and is enriched in the neuropil.

Its subcellular location is the golgi apparatus membrane. It is found in the presynaptic cell membrane. The enzyme catalyses L-cysteinyl-[protein] + hexadecanoyl-CoA = S-hexadecanoyl-L-cysteinyl-[protein] + CoA. In terms of biological role, probable palmitoyltransferase which is required for photoreceptor synaptic transmission and for the correct expression and localization of palmitoylated protein Csp and synaptosomal-associated protein Snap25. Probably palmitoylates Csp. Probably also palmitoylates the dorsal-ventral patterning protein Sog and promotes its secretion and activity and the stabilization of the membrane-bound form. Required for synaptic vesicle exocytosis. The sequence is that of Palmitoyltransferase Hip14 from Drosophila melanogaster (Fruit fly).